The chain runs to 242 residues: Segregation and condensation protein A (242 aa).

The protein belongs to the ScpA family. In terms of assembly, component of a cohesin-like complex composed of ScpA, ScpB and the Smc homodimer, in which ScpA and ScpB bind to the head domain of Smc. The presence of the three proteins is required for the association of the complex with DNA.

The protein localises to the cytoplasm. Functionally, participates in chromosomal partition during cell division. May act via the formation of a condensin-like complex containing Smc and ScpB that pull DNA away from mid-cell into both cell halves. This chain is Segregation and condensation protein A, found in Streptococcus pneumoniae serotype 2 (strain D39 / NCTC 7466).